We begin with the raw amino-acid sequence, 469 residues long: Ribulose bisphosphate carboxylase large chain (469 aa).

A propeptide spanning residues 1 to 2 is cleaved from the precursor; that stretch reads MS. Pro3 carries the post-translational modification N-acetylproline. An N6,N6,N6-trimethyllysine modification is found at Lys14. Positions 123 and 173 each coordinate substrate. The active-site Proton acceptor is the Lys175. Lys177 is a substrate binding site. Residues Lys201, Asp203, and Glu204 each contribute to the Mg(2+) site. An N6-carboxylysine modification is found at Lys201. The active-site Proton acceptor is the His294. Arg295, His327, and Ser379 together coordinate substrate.

This sequence belongs to the RuBisCO large chain family. Type I subfamily. As to quaternary structure, heterohexadecamer of 8 large chains and 8 small chains; disulfide-linked. The disulfide link is formed within the large subunit homodimers. Requires Mg(2+) as cofactor. In terms of processing, the disulfide bond which can form in the large chain dimeric partners within the hexadecamer appears to be associated with oxidative stress and protein turnover.

The protein resides in the plastid. It localises to the chloroplast. It catalyses the reaction 2 (2R)-3-phosphoglycerate + 2 H(+) = D-ribulose 1,5-bisphosphate + CO2 + H2O. The catalysed reaction is D-ribulose 1,5-bisphosphate + O2 = 2-phosphoglycolate + (2R)-3-phosphoglycerate + 2 H(+). RuBisCO catalyzes two reactions: the carboxylation of D-ribulose 1,5-bisphosphate, the primary event in carbon dioxide fixation, as well as the oxidative fragmentation of the pentose substrate in the photorespiration process. Both reactions occur simultaneously and in competition at the same active site. The sequence is that of Ribulose bisphosphate carboxylase large chain from Iris ensata (Japanese iris).